The following is a 590-amino-acid chain: UvrABC system protein C (590 aa).

The GIY-YIG domain occupies 11-85 (ETPGVYLWKR…IKAHRPLYNV (75 aa)). Residues 194-229 (DGLLQELEAKMREAARRLEFERAAEIRDQMEALRAF) form the UVR domain.

The protein belongs to the UvrC family. In terms of assembly, interacts with UvrB in an incision complex.

The protein localises to the cytoplasm. The UvrABC repair system catalyzes the recognition and processing of DNA lesions. UvrC both incises the 5' and 3' sides of the lesion. The N-terminal half is responsible for the 3' incision and the C-terminal half is responsible for the 5' incision. The protein is UvrABC system protein C of Thermus thermophilus (strain ATCC 27634 / DSM 579 / HB8).